We begin with the raw amino-acid sequence, 513 residues long: CUGBP Elav-like family member 2 (513 aa).

RRM domains follow at residues 35–118 (IKMF…PADS), 127–207 (RKLF…FADT), and 428–506 (ANLF…LKRS).

Belongs to the CELF/BRUNOL family.

Its subcellular location is the nucleus. The protein localises to the cytoplasm. Its function is as follows. RNA-binding protein implicated in the regulation of several post-transcriptional events. May be involved in pre-mRNA alternative splicing, mRNA translation repression and stability. This chain is CUGBP Elav-like family member 2 (celf2), found in Xenopus tropicalis (Western clawed frog).